The sequence spans 401 residues: Membrane protein UL43 homolog (401 aa).

10 helical membrane-spanning segments follow: residues 43–63 (FVGI…IDLL), 67–87 (STCL…RVPI), 93–113 (IVTV…SVWV), 124–144 (LIVV…ISLF), 159–179 (ASLL…LVEL), 182–202 (VPIG…FGLA), 259–279 (PGVI…WIVL), 294–314 (YVVF…QLVI), 332–352 (AVCM…SLAF), and 379–399 (ISRW…ATII).

This sequence belongs to the alphaherpesvirinae HHV-1 UL43 family.

The protein resides in the membrane. In Equine herpesvirus 1 (strain Ab4p) (EHV-1), this protein is Membrane protein UL43 homolog.